Reading from the N-terminus, the 473-residue chain is MLKVTVPSCSASSCSSVTASAAPGTASLVPDYWIDGSNRDALSDFFEVESELGRGATSIVYRCKQKGTQKPYALKVLKKTVDKKIVRTEIGVLLRLSHPNIIKLKEIFETPTEISLVLELVTGGELFDRIVEKGYYSERDAADAVKQILEAVAYLHENGIVHRDLKPENLLYATPAPDAPLKIADFGLSKIVEHQVLMKTVCGTPGYCAPEILRGCAYGPEVDMWSVGIITYILLCGFEPFYDERGDQFMFRRILNCEYYFISPWWDEVSLNAKDLVRKLIVLDPKKRLTTFQALQHPWVTGKAANFVHMDTAQKKLQEFNARRKLKAAVKAVVASSRLGSASSSHGSIQESHKASRDPSPIQDGNEDMKAIPEGEKIQGDGAQAAVKGAQAELMKVQALEKVKGADINAEEAPKMVPKAVEDGIKVADLELEEGLAEEKLKTVEEAAAPREGQGSSAVGFEVPQQDVILPEY.

2 positions are modified to phosphoserine; by autocatalysis: serine 12 and serine 13. The Protein kinase domain occupies 46 to 300; sequence FEVESELGRG…TFQALQHPWV (255 aa). Residues 52–60 and lysine 75 contribute to the ATP site; that span reads LGRGATSIV. A glycan (O-linked (GlcNAc) threonine) is linked at threonine 57. Serine 58 carries O-linked (GlcNAc) serine glycosylation. The O-linked (GlcNAc) serine glycan is linked to serine 137. The active-site Proton acceptor is the aspartate 164. The O-linked (GlcNAc) serine glycan is linked to serine 189. Threonine 200 is subject to Phosphothreonine; by CaMKK1 and CaMKK2. An autoinhibitory domain region spans residues 305 to 321; sequence ANFVHMDTAQKKLQEFN. The tract at residues 306–323 is PP2A-binding; the sequence is NFVHMDTAQKKLQEFNAR. Residues 322 to 341 are calmodulin-binding; it reads ARRKLKAAVKAVVASSRLGS. A Phosphoserine; by autocatalysis modification is found at serine 336. Serine 341 carries the phosphoserine modification. Positions 341–350 are enriched in low complexity; sequence SASSSHGSIQ. Disordered regions lie at residues 341 to 368 and 445 to 473; these read SASS…GNED and EEAA…LPEY. Residues serine 344, serine 345, and serine 356 are each glycosylated (O-linked (GlcNAc) serine). Serine 360 bears the Phosphoserine mark.

This sequence belongs to the protein kinase superfamily. CAMK Ser/Thr protein kinase family. CaMK subfamily. In terms of assembly, monomer. Interacts with protein phosphatase 2A (PPP2CA/PPP2CB); the interaction is mutually exclusive with binding to Ca(2+)/calmodulin. In terms of processing, phosphorylated by CaMKK1 and CaMKK2 on Thr-200. Dephosphorylated by protein phosphatase 2A. Autophosphorylated on Ser-12 and Ser-13. Glycosylation at Ser-189 modulates the phosphorylation of CaMK4 at Thr-200 and negatively regulates its activity toward CREB1 in basal conditions and during early inomycin stimulation. As to expression, expressed in brain, thymus, CD4 T-cells, testis and epithelial ovarian cancer tissue.

Its subcellular location is the cytoplasm. The protein localises to the nucleus. The catalysed reaction is L-seryl-[protein] + ATP = O-phospho-L-seryl-[protein] + ADP + H(+). It carries out the reaction L-threonyl-[protein] + ATP = O-phospho-L-threonyl-[protein] + ADP + H(+). With respect to regulation, activated by Ca(2+)/calmodulin. Binding of calmodulin results in conformational change that relieves intrasteric autoinhibition and allows phosphorylation of Thr-200 within the activation loop by CaMKK1 or CaMKK2. Phosphorylation of Thr-200 results in a 10-20-fold increase in total activity to generate Ca(2+)/calmodulin-independent activity. Autophosphorylation of the N-terminus Ser-12 and Ser-13 is required for full activation. Inactivated by protein phosphatase 2A (PPP2CA/PPP2CB) which dephosphorylates Thr-200, thereby terminating autonomous activity and helping to maintain the enzyme in its autoinhibited state. Its function is as follows. Calcium/calmodulin-dependent protein kinase that operates in the calcium-triggered CaMKK-CaMK4 signaling cascade and regulates, mainly by phosphorylation, the activity of several transcription activators, such as CREB1, MEF2D, JUN and RORA, which play pivotal roles in immune response, inflammation, and memory consolidation. In the thymus, regulates the CD4(+)/CD8(+) double positive thymocytes selection threshold during T-cell ontogeny. In CD4 memory T-cells, is required to link T-cell antigen receptor (TCR) signaling to the production of IL2, IFNG and IL4 (through the regulation of CREB and MEF2). Regulates the differentiation and survival phases of osteoclasts and dendritic cells (DCs). Mediates DCs survival by linking TLR4 and the regulation of temporal expression of BCL2. Phosphorylates the transcription activator CREB1 on 'Ser-133' in hippocampal neuron nuclei and contribute to memory consolidation and long term potentiation (LTP) in the hippocampus. Can activate the MAP kinases MAPK1/ERK2, MAPK8/JNK1 and MAPK14/p38 and stimulate transcription through the phosphorylation of ELK1 and ATF2. Can also phosphorylate in vitro CREBBP, PRM2, MEF2A and STMN1/OP18. The chain is Calcium/calmodulin-dependent protein kinase type IV (CAMK4) from Homo sapiens (Human).